The sequence spans 108 residues: Replication initiation control protein YabA (108 aa).

Zn(2+) contacts are provided by histidine 82, cysteine 84, cysteine 98, and cysteine 101.

The protein belongs to the YabA family. In terms of assembly, homotetramer. Interacts with both DnaA and DnaN, acting as a bridge between these two proteins. Requires Zn(2+) as cofactor.

It localises to the cytoplasm. It is found in the nucleoid. Its function is as follows. Involved in control of chromosome replication initiation. Inhibits the cooperative binding of DnaA to the oriC region, thus negatively regulating initiation of chromosome replication. Inhibits the ability of DnaA-ATP to form a helix on DNA; does not disassemble preformed DnaA-DNA helices. Decreases the residence time of DnaA on the chromosome at its binding sites (oriC, replication forks and promoter-binding sites). Tethers DnaA to the replication machinery via the DNA polymerase beta sliding clamp subunit (dnaN). Associates with oriC and other DnaA targets on the chromosome in a DnaA-dependent manner. This chain is Replication initiation control protein YabA, found in Streptococcus agalactiae serotype Ia (strain ATCC 27591 / A909 / CDC SS700).